A 117-amino-acid chain; its full sequence is Large ribosomal subunit protein bL20c (117 aa).

It belongs to the bacterial ribosomal protein bL20 family.

The protein resides in the plastid. Its subcellular location is the chloroplast. Functionally, binds directly to 23S ribosomal RNA and is necessary for the in vitro assembly process of the 50S ribosomal subunit. It is not involved in the protein synthesizing functions of that subunit. The chain is Large ribosomal subunit protein bL20c from Eucalyptus globulus subsp. globulus (Tasmanian blue gum).